The following is a 390-amino-acid chain: MASPEASSSGNTEDLRIEDLFHQKRNEDTIAKIFSIIYAPVGLIILLIRVFLGFHTFIVACLLRKSAALRMHTLRIMCSILGIVVEKSGHRDESARVLCANHVSILDHLAVDILTPCLLPSVWDIPSIIRWCFGYVDLGATRGRDQLVSRAKQLLTREQMPLLAFPEGIITSGEKALIKFNTWCFEVSSVVQPVSVRVWRPYPWKVSVSVLGSSWWTDLFYFFALPFTVITVEYLPKMERRENESLEEFTARVAETLAGNLKIAVSKFGISDATEAAKRLRTDRERAKKVVVREKTSPRLADPRQMDECAMRIKQSFPSFHLSAIRRDLEKTRSQTTTVNNLKAGKISSSASDGQTGKVTLDAGTWRGVFDNRKWQMIEVNRQKYMNRDS.

The Cytoplasmic portion of the chain corresponds to 1–32 (MASPEASSSGNTEDLRIEDLFHQKRNEDTIAK). Residues 33–53 (IFSIIYAPVGLIILLIRVFLG) lie within the membrane without spanning it. The Cytoplasmic portion of the chain corresponds to 54 to 390 (FHTFIVACLL…NRQKYMNRDS (337 aa)). Positions 305–347 (QMDECAMRIKQSFPSFHLSAIRRDLEKTRSQTTTVNNLKAGKI) constitute a CUE domain.

It belongs to the AUP1 family.

It is found in the endoplasmic reticulum membrane. It localises to the lipid droplet. The protein is Lipid droplet-regulating VLDL assembly factor AUP1 homolog of Caenorhabditis elegans.